The following is a 133-amino-acid chain: Small ribosomal subunit protein uS8 (133 aa).

The disordered stretch occupies residues 1–32 (MANHDPISDMLTRIRNASEKRHESTKVPASRM). Residues 16 to 25 (NASEKRHEST) are compositionally biased toward basic and acidic residues.

The protein belongs to the universal ribosomal protein uS8 family. In terms of assembly, part of the 30S ribosomal subunit. Contacts proteins S5 and S12.

Functionally, one of the primary rRNA binding proteins, it binds directly to 16S rRNA central domain where it helps coordinate assembly of the platform of the 30S subunit. The polypeptide is Small ribosomal subunit protein uS8 (Synechococcus sp. (strain CC9311)).